The primary structure comprises 351 residues: Probable dual-specificity RNA methyltransferase RlmN (351 aa).

Glutamate 92 serves as the catalytic Proton acceptor. Residues 98–334 (SGDRLTVCVS…VRWSKGLGAD (237 aa)) form the Radical SAM core domain. An intrachain disulfide couples cysteine 105 to cysteine 337. [4Fe-4S] cluster is bound by residues cysteine 112, cysteine 116, and cysteine 119. S-adenosyl-L-methionine-binding positions include 159–160 (GE), serine 189, 218–220 (SLH), and asparagine 294. Cysteine 337 functions as the S-methylcysteine intermediate in the catalytic mechanism.

It belongs to the radical SAM superfamily. RlmN family. The cofactor is [4Fe-4S] cluster.

It is found in the cytoplasm. It catalyses the reaction adenosine(2503) in 23S rRNA + 2 reduced [2Fe-2S]-[ferredoxin] + 2 S-adenosyl-L-methionine = 2-methyladenosine(2503) in 23S rRNA + 5'-deoxyadenosine + L-methionine + 2 oxidized [2Fe-2S]-[ferredoxin] + S-adenosyl-L-homocysteine. The enzyme catalyses adenosine(37) in tRNA + 2 reduced [2Fe-2S]-[ferredoxin] + 2 S-adenosyl-L-methionine = 2-methyladenosine(37) in tRNA + 5'-deoxyadenosine + L-methionine + 2 oxidized [2Fe-2S]-[ferredoxin] + S-adenosyl-L-homocysteine. Functionally, specifically methylates position 2 of adenine 2503 in 23S rRNA and position 2 of adenine 37 in tRNAs. The chain is Probable dual-specificity RNA methyltransferase RlmN from Synechococcus sp. (strain ATCC 27144 / PCC 6301 / SAUG 1402/1) (Anacystis nidulans).